The chain runs to 153 residues: Arachidonate 5-lipoxygenase-activating protein (153 aa).

Over 1-8 (MDQEAVGN) the chain is Lumenal. A helical transmembrane segment spans residues 9–30 (VVLLAIVTLISVVQNGFFAHKV). The Cytoplasmic segment spans residues 31-52 (EHESRNQNGRSFQRTGTLAFER). A helical transmembrane segment spans residues 53–77 (VYTANQNCVDAYPTFLAVLWTAGLL). Over 78–80 (CSQ) the chain is Lumenal. Residues 81–102 (VPAAFAGLMYLFVRQKYFVGYL) form a helical membrane-spanning segment. The Cytoplasmic segment spans residues 103-107 (GERTQ). An intramembrane segment occupies 108–115 (STPGYIFG). The chain crosses the membrane as a helical span at residues 116-128 (KRIILFLFLMSLA). At 129 to 153 (GILNYCLILLFGSDFENYIKTISTT) the chain is on the lumenal side.

The protein belongs to the MAPEG family. Homotrimer. Interacts with LTC4S and ALOX5.

It is found in the nucleus membrane. The protein localises to the endoplasmic reticulum membrane. In terms of biological role, required for leukotriene biosynthesis by ALOX5 (5-lipoxygenase). Anchors ALOX5 to the membrane. Binds arachidonic acid, and could play an essential role in the transfer of arachidonic acid to ALOX5. Binds to MK-886, a compound that blocks the biosynthesis of leukotrienes. This Oryctolagus cuniculus (Rabbit) protein is Arachidonate 5-lipoxygenase-activating protein (ALOX5AP).